The chain runs to 255 residues: Small ribosomal subunit protein uS2 (255 aa).

A disordered region spans residues Ala-232–Ala-255.

It belongs to the universal ribosomal protein uS2 family.

In Rhizobium meliloti (strain 1021) (Ensifer meliloti), this protein is Small ribosomal subunit protein uS2.